The chain runs to 337 residues: Glyceraldehyde-3-phosphate dehydrogenase (337 aa).

NAD(+) contacts are provided by residues 11–12 and glycine 111; that span reads TI. Position 140 to 142 (140 to 142) interacts with D-glyceraldehyde 3-phosphate; the sequence is SCN. The active-site Nucleophile is the cysteine 141. NAD(+) is bound at residue arginine 169. The segment at 177–196 is disordered; it reads KKGPINSIVPTTEVPSHHGP. 194–195 serves as a coordination point for D-glyceraldehyde 3-phosphate; it reads HG. An NAD(+)-binding site is contributed by glutamine 301.

Belongs to the glyceraldehyde-3-phosphate dehydrogenase family. As to quaternary structure, homotetramer.

The protein localises to the cytoplasm. It carries out the reaction D-glyceraldehyde 3-phosphate + phosphate + NADP(+) = (2R)-3-phospho-glyceroyl phosphate + NADPH + H(+). It catalyses the reaction D-glyceraldehyde 3-phosphate + phosphate + NAD(+) = (2R)-3-phospho-glyceroyl phosphate + NADH + H(+). It functions in the pathway carbohydrate degradation; glycolysis; pyruvate from D-glyceraldehyde 3-phosphate: step 1/5. The polypeptide is Glyceraldehyde-3-phosphate dehydrogenase (Methanosphaera stadtmanae (strain ATCC 43021 / DSM 3091 / JCM 11832 / MCB-3)).